A 643-amino-acid polypeptide reads, in one-letter code: 3D-(3,5/4)-trihydroxycyclohexane-1,2-dione hydrolase (643 aa).

Glu65 provides a ligand contact to thiamine diphosphate. Positions 441-521 (SLPGDLQRMW…VNVLLFDNCG (81 aa)) are thiamine pyrophosphate binding. The Mg(2+) site is built by Asp492 and Asn519.

It belongs to the TPP enzyme family. The cofactor is Mg(2+). Requires thiamine diphosphate as cofactor.

The enzyme catalyses 3D-3,5/4-trihydroxycyclohexane-1,2-dione + H2O = 5-deoxy-D-glucuronate + H(+). Its pathway is polyol metabolism; myo-inositol degradation into acetyl-CoA; acetyl-CoA from myo-inositol: step 3/7. Its function is as follows. Involved in the cleavage of the C1-C2 bond of 3D-(3,5/4)-trihydroxycyclohexane-1,2-dione (THcHDO) to yield 5-deoxy-glucuronate (5DG). The sequence is that of 3D-(3,5/4)-trihydroxycyclohexane-1,2-dione hydrolase from Clostridium botulinum (strain Eklund 17B / Type B).